The primary structure comprises 396 residues: 1-deoxy-D-xylulose 5-phosphate reductoisomerase (396 aa).

The NADPH site is built by T10, G11, S12, I13, N38, and N123. 1-deoxy-D-xylulose 5-phosphate is bound at residue K124. Residue E125 participates in NADPH binding. Residue D149 participates in Mn(2+) binding. 1-deoxy-D-xylulose 5-phosphate contacts are provided by S150, E151, S185, and H208. E151 lines the Mn(2+) pocket. Position 214 (G214) interacts with NADPH. S221, N226, K227, and E230 together coordinate 1-deoxy-D-xylulose 5-phosphate. E230 is a binding site for Mn(2+).

This sequence belongs to the DXR family. Mg(2+) serves as cofactor. Mn(2+) is required as a cofactor.

The catalysed reaction is 2-C-methyl-D-erythritol 4-phosphate + NADP(+) = 1-deoxy-D-xylulose 5-phosphate + NADPH + H(+). The protein operates within isoprenoid biosynthesis; isopentenyl diphosphate biosynthesis via DXP pathway; isopentenyl diphosphate from 1-deoxy-D-xylulose 5-phosphate: step 1/6. Catalyzes the NADPH-dependent rearrangement and reduction of 1-deoxy-D-xylulose-5-phosphate (DXP) to 2-C-methyl-D-erythritol 4-phosphate (MEP). In Shewanella halifaxensis (strain HAW-EB4), this protein is 1-deoxy-D-xylulose 5-phosphate reductoisomerase.